The following is a 434-amino-acid chain: Mitochondrial distribution and morphology protein 12 (434 aa).

Residues 1-434 enclose the SMP-LTD domain; the sequence is MSIDIDWERA…VYPSFWTFLV (434 aa). Residues 70–83 are compositionally biased toward acidic residues; it reads YEEDDNENFSESSE. Disordered regions lie at residues 70-141 and 181-275; these read YEED…LRSP and TPLG…DDLP. Residues 86–97 show a composition bias toward basic and acidic residues; that stretch reads SPTREPVDRYGS. Polar residues predominate over residues 215–237; the sequence is SAQSRPSTANTGNTLLSRGSMSS.

Belongs to the MDM12 family. In terms of assembly, component of the ER-mitochondria encounter structure (ERMES) or MDM complex, composed of MMM1, MDM10, MDM12 and MDM34. An MMM1 homodimer associates with one molecule of MDM12 on each side in a pairwise head-to-tail manner, and the SMP-LTD domains of MMM1 and MDM12 generate a continuous hydrophobic tunnel for phospholipid trafficking.

It localises to the mitochondrion outer membrane. The protein resides in the endoplasmic reticulum membrane. Its function is as follows. Component of the ERMES/MDM complex, which serves as a molecular tether to connect the endoplasmic reticulum (ER) and mitochondria. Components of this complex are involved in the control of mitochondrial shape and protein biogenesis, and function in nonvesicular lipid trafficking between the ER and mitochondria. MDM12 is required for the interaction of the ER-resident membrane protein MMM1 and the outer mitochondrial membrane-resident beta-barrel protein MDM10. The MDM12-MMM1 subcomplex functions in the major beta-barrel assembly pathway that is responsible for biogenesis of all mitochondrial outer membrane beta-barrel proteins, and acts in a late step after the SAM complex. The MDM10-MDM12-MMM1 subcomplex further acts in the TOM40-specific pathway after the action of the MDM12-MMM1 complex. Essential for establishing and maintaining the structure of mitochondria and maintenance of mtDNA nucleoids. This Blastomyces gilchristii (strain SLH14081) (Blastomyces dermatitidis) protein is Mitochondrial distribution and morphology protein 12.